Reading from the N-terminus, the 71-residue chain is Protein SlyX homolog (71 aa).

Residues 49 to 71 form a disordered region; the sequence is KIKESQSSSSMMSNEPEPPPPHY.

The protein belongs to the SlyX family.

The polypeptide is Protein SlyX homolog (Pseudoalteromonas translucida (strain TAC 125)).